A 423-amino-acid chain; its full sequence is Serine hydroxymethyltransferase (423 aa).

Residues L125 and 129-131 (GHL) contribute to the (6S)-5,6,7,8-tetrahydrofolate site. Residue K234 is modified to N6-(pyridoxal phosphate)lysine. A (6S)-5,6,7,8-tetrahydrofolate-binding site is contributed by E249.

This sequence belongs to the SHMT family. Homodimer. Pyridoxal 5'-phosphate serves as cofactor.

The protein resides in the cytoplasm. It carries out the reaction (6R)-5,10-methylene-5,6,7,8-tetrahydrofolate + glycine + H2O = (6S)-5,6,7,8-tetrahydrofolate + L-serine. The protein operates within one-carbon metabolism; tetrahydrofolate interconversion. Its pathway is amino-acid biosynthesis; glycine biosynthesis; glycine from L-serine: step 1/1. Catalyzes the reversible interconversion of serine and glycine with tetrahydrofolate (THF) serving as the one-carbon carrier. This reaction serves as the major source of one-carbon groups required for the biosynthesis of purines, thymidylate, methionine, and other important biomolecules. Also exhibits THF-independent aldolase activity toward beta-hydroxyamino acids, producing glycine and aldehydes, via a retro-aldol mechanism. This chain is Serine hydroxymethyltransferase, found in Thermobifida fusca (strain YX).